Reading from the N-terminus, the 132-residue chain is Large ribosomal subunit protein bL17 (132 aa).

This sequence belongs to the bacterial ribosomal protein bL17 family. As to quaternary structure, part of the 50S ribosomal subunit. Contacts protein L32.

This is Large ribosomal subunit protein bL17 from Leptothrix cholodnii (strain ATCC 51168 / LMG 8142 / SP-6) (Leptothrix discophora (strain SP-6)).